We begin with the raw amino-acid sequence, 119 residues long: Small ribosomal subunit protein bS16 (119 aa).

The protein belongs to the bacterial ribosomal protein bS16 family.

In Chlamydia abortus (strain DSM 27085 / S26/3) (Chlamydophila abortus), this protein is Small ribosomal subunit protein bS16.